We begin with the raw amino-acid sequence, 453 residues long: MSHDSEPQPVTAHPAGPLTGALKPPGDKSISHRAMIFGLLSVGETRVEGLLEGDDVLRTAAAVKALGAQVTREGEGRWRIVGVGIGGMQDPVGVLDFGNAGTGSRLMMGVVGGQPVTATFDGDASLRKRPMRRILDPILKMGAEVVSEAEGGRVPLTLRGPREAIPIRYELPVASAQIKSAVLLAGLNAPGTTTVIEKAASRDHTERMLRLFGADVSVTPSGEGGHGRTVTLTGQPTLRGTDVIVPADPSSAAFPLVAALIVPGSEVILRGVMMNPLRTGLITTLIEMGADIERFDEREEGGETVADLRVRASRLRGVDVPAERAPSMIDEYPILAVAAAFAEGTTRMNGLHELRVKESDRLAAVAAGLAANGVGHDIEGDDLIVTGNGGPPAGGGTVATHLDHRIAMAFLVMGLATRKPVTVDDGAMIATSFPSFRPTMLALGARIEDGAAA.

The tract at residues 1–25 (MSHDSEPQPVTAHPAGPLTGALKPP) is disordered. 3-phosphoshikimate is bound by residues Lys28, Ser29, and Arg33. Lys28 lines the phosphoenolpyruvate pocket. Residues Gly101 and Arg129 each coordinate phosphoenolpyruvate. Ser175, Gln177, Asp330, and Lys357 together coordinate 3-phosphoshikimate. Gln177 contacts phosphoenolpyruvate. The active-site Proton acceptor is the Asp330. Phosphoenolpyruvate-binding residues include Arg361 and Arg405.

Belongs to the EPSP synthase family. As to quaternary structure, monomer.

Its subcellular location is the cytoplasm. The catalysed reaction is 3-phosphoshikimate + phosphoenolpyruvate = 5-O-(1-carboxyvinyl)-3-phosphoshikimate + phosphate. Its pathway is metabolic intermediate biosynthesis; chorismate biosynthesis; chorismate from D-erythrose 4-phosphate and phosphoenolpyruvate: step 6/7. Functionally, catalyzes the transfer of the enolpyruvyl moiety of phosphoenolpyruvate (PEP) to the 5-hydroxyl of shikimate-3-phosphate (S3P) to produce enolpyruvyl shikimate-3-phosphate and inorganic phosphate. This chain is 3-phosphoshikimate 1-carboxyvinyltransferase, found in Methylorubrum populi (strain ATCC BAA-705 / NCIMB 13946 / BJ001) (Methylobacterium populi).